The following is a 161-amino-acid chain: UPF0178 protein BR1979/BS1330_I1973 (161 aa).

It belongs to the UPF0178 family.

The polypeptide is UPF0178 protein BR1979/BS1330_I1973 (Brucella suis biovar 1 (strain 1330)).